A 357-amino-acid polypeptide reads, in one-letter code: Sorbitol dehydrogenase 2 (357 aa).

Cysteine 43 is a binding site for Zn(2+). Residue tyrosine 49 participates in substrate binding. Positions 68 and 69 each coordinate Zn(2+). Substrate is bound at residue glutamate 154. NAD(+) is bound by residues aspartate 202, lysine 207, 275-277 (VGM), and 299-301 (CFR). Substrate is bound by residues arginine 301 and tyrosine 302.

This sequence belongs to the zinc-containing alcohol dehydrogenase family. As to quaternary structure, homotetramer. It depends on Zn(2+) as a cofactor.

It carries out the reaction keto-D-fructose + NADH + H(+) = D-sorbitol + NAD(+). It catalyses the reaction xylitol + NAD(+) = D-xylulose + NADH + H(+). Functionally, polyol dehydrogenase that catalyzes the reversible NAD(+)-dependent oxidation of various sugar alcohols. Is active with D-sorbitol (D-glucitol) and xylitol as substrates, leading to the C2-oxidized product D-fructose and D-xylulose, respectively. This chain is Sorbitol dehydrogenase 2 (SOR2), found in Saccharomyces cerevisiae (strain ATCC 204508 / S288c) (Baker's yeast).